The following is a 172-amino-acid chain: R-phycocyanin beta chain (172 aa).

N35 and D39 together coordinate (2R,3E)-phycoerythrobilin. Residues N72, C82, and 84-85 contribute to the (2R,3E)-phycocyanobilin site; that span reads RD. An N4-methylasparagine modification is found at N72. (2R,3E)-phycoerythrobilin contacts are provided by residues 149–151 and C153; that span reads PAG.

Belongs to the phycobiliprotein family. Heterododecamer of 6 alpha and 6 beta chains. The basic functional unit of phycobiliproteins is a ring-shaped hexamer formed from two back-to-back trimers contacting via the alpha chain subunits. The trimers are composed of alpha/beta subunit heterodimers arranged around a three-fold axis of symmetry. The phycoerythrins also contain a gamma subunit which is located in the center of the hexamer. Post-translationally, contains one covalently linked phycocyanobilin chromophore and one covalently linked phycoerythrobilin chromophore.

It is found in the plastid. It localises to the chloroplast thylakoid membrane. Its function is as follows. Light-harvesting photosynthetic tetrapyrrole chromophore-protein from the phycobiliprotein complex (phycobilisome, PBS). Phycocyanin is the major phycobiliprotein in the PBS rod. The polypeptide is R-phycocyanin beta chain (rpcB) (Polysiphonia urceolata (Red alga)).